Consider the following 178-residue polypeptide: Twist-related protein (178 aa).

The bHLH domain maps to 20 to 71 (QQRACANRRERQRTKELNDAFTLLRKLIPSMPSDKMSKIHTLRIATDYISFL).

In terms of assembly, efficient DNA binding requires dimerization with another bHLH protein. Homodimer. Forms a heterodimer with hlh-2. Expressed in defecation-associated muscles and neuron-like cells in the head at the L1 stage. In later larvae, expressed in SM cells and their descendants. Not expressed in differentiated body wall or sex muscles.

Its subcellular location is the nucleus. Functionally, acts as a transcriptional regulator. Involved in postembryonic mesodermal cell fate specification. Activates ceh-24 and egl-15 during mesodermal patterning. In Caenorhabditis elegans, this protein is Twist-related protein (hlh-8).